Here is a 192-residue protein sequence, read N- to C-terminus: Molybdenum cofactor cytidylyltransferase (192 aa).

Asp101 serves as a coordination point for Mg(2+).

In terms of assembly, monomer. Interacts with the Moco-binding chaperone PaoD. The cofactor is Mg(2+). It depends on Mn(2+) as a cofactor.

The enzyme catalyses Mo-molybdopterin + CTP + H(+) = Mo-molybdopterin cytosine dinucleotide + diphosphate. Functionally, transfers a CMP moiety from CTP to Mo-molybdopterin (Mo-MPT) cofactor (Moco or molybdenum cofactor) to form Mo-molybdopterin cytosine dinucleotide (Mo-MCD) cofactor. Is specific for CTP; other nucleotides such as ATP and GTP cannot be utilized. Is also able to convert MPT to MCD in the absence of molybdate, however, with only one catalytic turnover. The chain is Molybdenum cofactor cytidylyltransferase (mocA) from Escherichia coli (strain K12).